Consider the following 530-residue polypeptide: Type 2 DNA topoisomerase 6 subunit B (530 aa).

ATP-binding positions include asparagine 42, aspartate 76, serine 96–lysine 98, methionine 107–lysine 113, and lysine 427.

This sequence belongs to the TOP6B family. As to quaternary structure, homodimer. Heterotetramer of two Top6A and two Top6B chains.

It carries out the reaction ATP-dependent breakage, passage and rejoining of double-stranded DNA.. Not inhibited by the DNA gyrase inhibitor novobiocin, instead inhibited by eukaryotic topoisomerase inhibitors such as m- and o-amsacrine, ellipticine, and the quinolone CP-115,953. Radicicol inhibits the ATPase activity. Its function is as follows. Relaxes both positive and negative supercoils and exhibits a strong decatenase and unknotting activity; it cannot introduce DNA supercoils. ATP is absolutely required for DNA cleavage; the nonhydrolyzable analog AMP-PNP generates nicked or linear products from a supercoiled dsDNA substrate. Generates staggered two-nucleotide long 5' overhangs. The enzyme is covalently attached transiently to the 5'-ends of the cleaved strands. The chain is Type 2 DNA topoisomerase 6 subunit B from Saccharolobus shibatae (strain ATCC 51178 / DSM 5389 / JCM 8931 / NBRC 15437 / B12) (Sulfolobus shibatae).